Reading from the N-terminus, the 249-residue chain is tRNA (guanine-N(1)-)-methyltransferase (249 aa).

S-adenosyl-L-methionine is bound by residues G113 and 133 to 138; that span reads IGDYVL.

This sequence belongs to the RNA methyltransferase TrmD family. Homodimer.

Its subcellular location is the cytoplasm. The catalysed reaction is guanosine(37) in tRNA + S-adenosyl-L-methionine = N(1)-methylguanosine(37) in tRNA + S-adenosyl-L-homocysteine + H(+). Specifically methylates guanosine-37 in various tRNAs. The sequence is that of tRNA (guanine-N(1)-)-methyltransferase from Aeromonas hydrophila subsp. hydrophila (strain ATCC 7966 / DSM 30187 / BCRC 13018 / CCUG 14551 / JCM 1027 / KCTC 2358 / NCIMB 9240 / NCTC 8049).